A 66-amino-acid chain; its full sequence is Large ribosomal subunit protein uL29 (66 aa).

The protein belongs to the universal ribosomal protein uL29 family.

This is Large ribosomal subunit protein uL29 (rpmC) from Helicobacter pylori (strain J99 / ATCC 700824) (Campylobacter pylori J99).